Here is a 428-residue protein sequence, read N- to C-terminus: Light-independent protochlorophyllide reductase subunit N (428 aa).

Positions 16, 41, and 102 each coordinate [4Fe-4S] cluster.

The protein belongs to the BchN/ChlN family. In terms of assembly, protochlorophyllide reductase is composed of three subunits; ChlL, ChlN and ChlB. Forms a heterotetramer of two ChlB and two ChlN subunits. The cofactor is [4Fe-4S] cluster.

The enzyme catalyses chlorophyllide a + oxidized 2[4Fe-4S]-[ferredoxin] + 2 ADP + 2 phosphate = protochlorophyllide a + reduced 2[4Fe-4S]-[ferredoxin] + 2 ATP + 2 H2O. Its pathway is porphyrin-containing compound metabolism; chlorophyll biosynthesis (light-independent). Component of the dark-operative protochlorophyllide reductase (DPOR) that uses Mg-ATP and reduced ferredoxin to reduce ring D of protochlorophyllide (Pchlide) to form chlorophyllide a (Chlide). This reaction is light-independent. The NB-protein (ChlN-ChlB) is the catalytic component of the complex. This is Light-independent protochlorophyllide reductase subunit N from Synechococcus sp. (strain CC9311).